The sequence spans 468 residues: Pentatricopeptide repeat-containing protein At5g46680 (468 aa).

PPR repeat units follow at residues 12–46 (STKL…GVLP), 47–81 (DVIT…GIEP), 82–116 (DVTT…GLSP), 117–152 (DMWS…GLVP), 153–183 (GIDT…LKSR), 187–221 (ELMT…GYTP), 222–256 (NAVT…GYTF), 257–291 (DGFA…GTRS), 293–327 (DIVS…GLKP), 328–362 (DDYT…GMQP), 363–393 (SVVT…MEVR), and 394–428 (DEFT…GMKI).

Belongs to the PPR family. P subfamily.

In Arabidopsis thaliana (Mouse-ear cress), this protein is Pentatricopeptide repeat-containing protein At5g46680.